The primary structure comprises 189 residues: Stathmin-4 (189 aa).

Residues Cys20 and Cys22 are each lipidated (S-palmitoyl cysteine). Residues 48–189 enclose the SLD domain; the sequence is SDMEVIELNK…NKELKEEASR (142 aa). Phosphoserine is present on residues Glu54 and Ser90. Positions 90 to 189 form a coiled coil; it reads SLEEIQKKLE…NKELKEEASR (100 aa). The tract at residues 168–189 is disordered; it reads QEKDKHAEEVRKNKELKEEASR.

Belongs to the stathmin family. Nervous tissue.

Its subcellular location is the golgi apparatus. The protein localises to the cell projection. The protein resides in the growth cone. It localises to the axon. Exhibits microtubule-destabilizing activity. This chain is Stathmin-4 (Stmn4), found in Rattus norvegicus (Rat).